Reading from the N-terminus, the 276-residue chain is Formamidopyrimidine-DNA glycosylase (276 aa).

The Schiff-base intermediate with DNA role is filled by proline 2. Catalysis depends on glutamate 3, which acts as the Proton donor. The Proton donor; for beta-elimination activity role is filled by lysine 60. Histidine 93, arginine 112, and arginine 155 together coordinate DNA. An FPG-type zinc finger spans residues 240 to 274 (LVYGRKDEACTKCGAEIIRFVVGGRGTHICPDCQK). The active-site Proton donor; for delta-elimination activity is arginine 264.

The protein belongs to the FPG family. In terms of assembly, monomer. Zn(2+) is required as a cofactor.

It carries out the reaction Hydrolysis of DNA containing ring-opened 7-methylguanine residues, releasing 2,6-diamino-4-hydroxy-5-(N-methyl)formamidopyrimidine.. It catalyses the reaction 2'-deoxyribonucleotide-(2'-deoxyribose 5'-phosphate)-2'-deoxyribonucleotide-DNA = a 3'-end 2'-deoxyribonucleotide-(2,3-dehydro-2,3-deoxyribose 5'-phosphate)-DNA + a 5'-end 5'-phospho-2'-deoxyribonucleoside-DNA + H(+). In terms of biological role, involved in base excision repair of DNA damaged by oxidation or by mutagenic agents. Acts as a DNA glycosylase that recognizes and removes damaged bases. Has a preference for oxidized purines, such as 7,8-dihydro-8-oxoguanine (8-oxoG). Has AP (apurinic/apyrimidinic) lyase activity and introduces nicks in the DNA strand. Cleaves the DNA backbone by beta-delta elimination to generate a single-strand break at the site of the removed base with both 3'- and 5'-phosphates. In Brevibacillus brevis (strain 47 / JCM 6285 / NBRC 100599), this protein is Formamidopyrimidine-DNA glycosylase.